The following is a 485-amino-acid chain: Efflux pump bik6 (485 aa).

6 helical membrane-spanning segments follow: residues 42 to 62 (VYTT…SAIY), 86 to 106 (LLIF…EVYG), 108 to 128 (KWPA…TATA), 139 to 159 (FFAG…IVDI), 172 to 192 (YGIT…AFIA), and 199 to 219 (WTEY…ALWL). The N-linked (GlcNAc...) asparagine glycan is linked to Asn-241. 6 consecutive transmembrane segments (helical) span residues 269–289 (MLLD…YAIL), 306–326 (WGPV…LFAA), 353–373 (LPPM…FGWT), 379–399 (SSPW…TTIF), 417–437 (AIAA…LFVW), and 447–467 (WGST…FLFF).

The protein belongs to the major facilitator superfamily.

The protein resides in the membrane. Functionally, efflux pump; part of the gene cluster that mediates the biosynthesis of bikaverin, a red pigment also considered as a mycotoxin. This is Efflux pump bik6 from Gibberella fujikuroi (strain CBS 195.34 / IMI 58289 / NRRL A-6831) (Bakanae and foot rot disease fungus).